The sequence spans 470 residues: Siroheme synthase (470 aa).

The precorrin-2 dehydrogenase /sirohydrochlorin ferrochelatase stretch occupies residues 1–201 (MDYFPIFCQL…NDHVQADQHV (201 aa)). NAD(+) contacts are provided by residues 22-23 (EI) and 43-44 (CE). At S128 the chain carries Phosphoserine. The segment at 213 to 470 (GEVVLVGAGP…KVTECVAHVG (258 aa)) is uroporphyrinogen-III C-methyltransferase. P222 provides a ligand contact to S-adenosyl-L-methionine. D245 acts as the Proton acceptor in catalysis. K267 acts as the Proton donor in catalysis. S-adenosyl-L-methionine-binding positions include 298 to 300 (GGD), I303, 328 to 329 (TA), M379, and G408.

It in the N-terminal section; belongs to the precorrin-2 dehydrogenase / sirohydrochlorin ferrochelatase family. This sequence in the C-terminal section; belongs to the precorrin methyltransferase family.

It carries out the reaction uroporphyrinogen III + 2 S-adenosyl-L-methionine = precorrin-2 + 2 S-adenosyl-L-homocysteine + H(+). It catalyses the reaction precorrin-2 + NAD(+) = sirohydrochlorin + NADH + 2 H(+). The enzyme catalyses siroheme + 2 H(+) = sirohydrochlorin + Fe(2+). It participates in cofactor biosynthesis; adenosylcobalamin biosynthesis; precorrin-2 from uroporphyrinogen III: step 1/1. Its pathway is cofactor biosynthesis; adenosylcobalamin biosynthesis; sirohydrochlorin from precorrin-2: step 1/1. It functions in the pathway porphyrin-containing compound metabolism; siroheme biosynthesis; precorrin-2 from uroporphyrinogen III: step 1/1. The protein operates within porphyrin-containing compound metabolism; siroheme biosynthesis; siroheme from sirohydrochlorin: step 1/1. It participates in porphyrin-containing compound metabolism; siroheme biosynthesis; sirohydrochlorin from precorrin-2: step 1/1. Multifunctional enzyme that catalyzes the SAM-dependent methylations of uroporphyrinogen III at position C-2 and C-7 to form precorrin-2 via precorrin-1. Then it catalyzes the NAD-dependent ring dehydrogenation of precorrin-2 to yield sirohydrochlorin. Finally, it catalyzes the ferrochelation of sirohydrochlorin to yield siroheme. This chain is Siroheme synthase, found in Yersinia pestis.